The following is a 354-amino-acid chain: Cysteine and histidine-rich domain-containing protein morgana (354 aa).

Residues Cys4, Cys9, Cys23, His26, Cys41, Cys42, Cys58, His63, Cys140, Cys145, Cys159, His162, Cys177, Cys178, Cys194, and His199 each coordinate Zn(2+). 2 CHORD domains span residues 4–63 and 140–199; these read CYNR…LAKH and CKNN…YGEH. Residues 210–301 form the CS domain; that stretch reads VVQCRYDWHQ…LEPGSWSNLN (92 aa). Phosphoserine is present on residues Ser324 and Ser339.

Interacts with Hsp83.

The protein resides in the cytoplasm. It localises to the nucleus. The protein localises to the cytoskeleton. It is found in the spindle. In terms of biological role, regulates centrosome duplication and mitotic spindle dynamics. Also involved in controlling the size of dendritic arbors. May act as co-chaperone for Hsp83. During mitotic spindle assembly, regulates microtubule (MT) dynamics by binding to MTs and promoting MT polymerisation. Promotes the elongation and retraction of terminal branches in response to changes in body size, possibly acting downstream of the TORC2 pathway to enable proportional scaling of dendritic arbors. This Drosophila melanogaster (Fruit fly) protein is Cysteine and histidine-rich domain-containing protein morgana.